Consider the following 341-residue polypeptide: Phenylalanine--tRNA ligase alpha subunit (341 aa).

A Mg(2+)-binding site is contributed by E256.

It belongs to the class-II aminoacyl-tRNA synthetase family. Phe-tRNA synthetase alpha subunit type 1 subfamily. In terms of assembly, tetramer of two alpha and two beta subunits. The cofactor is Mg(2+).

The protein localises to the cytoplasm. It catalyses the reaction tRNA(Phe) + L-phenylalanine + ATP = L-phenylalanyl-tRNA(Phe) + AMP + diphosphate + H(+). This is Phenylalanine--tRNA ligase alpha subunit (pheS) from Chlamydia muridarum (strain MoPn / Nigg).